The following is a 134-amino-acid chain: Small ribosomal subunit protein uS8c (134 aa).

Belongs to the universal ribosomal protein uS8 family. As to quaternary structure, part of the 30S ribosomal subunit.

Its subcellular location is the plastid. One of the primary rRNA binding proteins, it binds directly to 16S rRNA central domain where it helps coordinate assembly of the platform of the 30S subunit. The chain is Small ribosomal subunit protein uS8c (rps8) from Epifagus virginiana (Beechdrops).